We begin with the raw amino-acid sequence, 355 residues long: WAT1-related protein At1g25270 (355 aa).

A run of 10 helical transmembrane segments spans residues 4 to 24 (VVAM…FKIT), 33 to 53 (VLVA…ALIF), 65 to 85 (LLLL…ILYL), 94 to 114 (TFSA…GLVF), 134 to 154 (LLGA…IHIW), 175 to 195 (VSIL…LWLL), 207 to 227 (LYWN…IIAL), 244 to 264 (LLAT…LVAW), 272 to 292 (LFVT…GSFA), and 297 to 317 (LHLG…LVVW). In terms of domain architecture, EamA 1 spans 12 to 142 (FIFAGMFILF…TLLGACGALV (131 aa)). The 107-residue stretch at 210-316 (NTSLMNGVGS…IMVGGVYLVV (107 aa)) folds into the EamA 2 domain.

The protein belongs to the drug/metabolite transporter (DMT) superfamily. Plant drug/metabolite exporter (P-DME) (TC 2.A.7.4) family.

It localises to the membrane. The sequence is that of WAT1-related protein At1g25270 from Arabidopsis thaliana (Mouse-ear cress).